A 100-amino-acid polypeptide reads, in one-letter code: Large ribosomal subunit protein uL23 (100 aa).

The protein belongs to the universal ribosomal protein uL23 family. Part of the 50S ribosomal subunit. Contacts protein L29, and trigger factor when it is bound to the ribosome.

One of the early assembly proteins it binds 23S rRNA. One of the proteins that surrounds the polypeptide exit tunnel on the outside of the ribosome. Forms the main docking site for trigger factor binding to the ribosome. In Vibrio campbellii (strain ATCC BAA-1116), this protein is Large ribosomal subunit protein uL23.